Consider the following 535-residue polypeptide: Palmdelphin (535 aa).

The stretch at 1-105 forms a coiled coil; the sequence is MEEAELLKER…KEELQVSTKE (105 aa). The tract at residues 423-450 is disordered; sequence VVIDDDDDDDDDEEADKKGEENTKESVS. Residues 424–436 show a composition bias toward acidic residues; sequence VIDDDDDDDDDEE. The segment covering 437-446 has biased composition (basic and acidic residues); the sequence is ADKKGEENTK.

It belongs to the paralemmin family.

The protein resides in the cytoplasm. It localises to the cell projection. Its subcellular location is the dendrite. The protein localises to the dendritic spine. This is Palmdelphin (palmd) from Xenopus laevis (African clawed frog).